The following is a 592-amino-acid chain: Testis-specific serine kinase substrate (592 aa).

The residue at position 217 (serine 217) is a Phosphoserine. Residues 232-308 are disordered; it reads QDETPRRQEA…VPAGWGMGPR (77 aa). Residues 234–264 show a composition bias toward basic and acidic residues; the sequence is ETPRRQEAELQEPEEKQEPEEKQEPEEKQKP. The span at 269–281 shows a compositional bias: polar residues; that stretch reads SWNSLGPAATSQG. Position 288 is a phosphoserine; by TSSK1 and TSSK2 (serine 288). Serine 316 carries the phosphoserine modification. Positions 566–592 are disordered; sequence LEGSTGTMGGGSSAGTPPKQGGSAPEQ.

In terms of processing, phosphorylated on serine residue(s) by STK22A/TSSK1 and STK22B/TSSK2. As to expression, highly expressed in testis. Expressed at low levels in prostate, female breast, placenta, ovary and thymus.

Its subcellular location is the cytoplasm. It localises to the cytoskeleton. The protein resides in the microtubule organizing center. It is found in the centrosome. The protein localises to the centriole. Its function is as follows. May play a role in testicular physiology, most probably in the process of spermatogenesis or spermatid development. In Homo sapiens (Human), this protein is Testis-specific serine kinase substrate (TSKS).